Reading from the N-terminus, the 207-residue chain is Small ribosomal subunit protein uS2 (207 aa).

The protein belongs to the universal ribosomal protein uS2 family.

The chain is Small ribosomal subunit protein uS2 from Pyrobaculum islandicum (strain DSM 4184 / JCM 9189 / GEO3).